The chain runs to 177 residues: Alkyl hydroperoxide reductase AhpD (177 aa).

Catalysis depends on C130, which acts as the Proton donor. C130 and C133 form a disulfide bridge. The active-site Cysteine sulfenic acid (-SOH) intermediate is C133.

Belongs to the AhpD family. Homotrimer.

The catalysed reaction is N(6)-[(R)-dihydrolipoyl]-L-lysyl-[lipoyl-carrier protein] + a hydroperoxide = N(6)-[(R)-lipoyl]-L-lysyl-[lipoyl-carrier protein] + an alcohol + H2O. In terms of biological role, antioxidant protein with alkyl hydroperoxidase activity. Required for the reduction of the AhpC active site cysteine residues and for the regeneration of the AhpC enzyme activity. The chain is Alkyl hydroperoxide reductase AhpD from Corynebacterium aurimucosum (strain ATCC 700975 / DSM 44827 / CIP 107346 / CN-1) (Corynebacterium nigricans).